We begin with the raw amino-acid sequence, 577 residues long: Moesin (577 aa).

An FERM domain is found at Pro-2 to Arg-295. Phosphoserine is present on Ser-74. Lys-79 carries the N6-acetyllysine modification. Residue Lys-83 is modified to N6-succinyllysine. The [IL]-x-C-x-x-[DE] motif signature appears at Ile-115–Glu-120. Tyr-116 is subject to Phosphotyrosine. Cys-117 carries the S-nitrosocysteine modification. Residues Lys-139 and Lys-165 each carry the N6-acetyllysine modification. Residues Leu-375–Glu-401 are compositionally biased toward basic and acidic residues. Disordered stretches follow at residues Leu-375–Asp-409 and Ala-466–Val-518. Ser-407 carries the post-translational modification Phosphoserine. Residues Ala-476 to Gly-487 show a composition bias toward acidic residues. The span at Ala-492–Val-518 shows a compositional bias: basic and acidic residues. The residue at position 527 (Ser-527) is a Phosphoserine. Thr-558 is subject to Phosphothreonine; by ROCK2 and STK10.

As to quaternary structure, in resting T-cells, part of a PAG1-NHERF1-MSN complex which is disrupted upon TCR activation. Interacts with NHERF1. Interacts with PPP1R16B. Interacts with PDZD8. Interacts with SELPLG and SYK; these interactions mediate the activation of SYK by SELPLG. Interacts with PDPN (via cytoplasmic domain); this interaction activates RHOA and promotes epithelial-mesenchymal transition. Interacts with SPN/CD43 cytoplasmic tail. Interacts with CD44. Interacts with ICAM2. Interacts with ICAM3 (via C-terminus). Interacts with PDZD8. Interacts with F-actin. Interacts with CD46. Interacts with PTPN6. In terms of processing, phosphorylation on Thr-558 is crucial for the formation of microvilli-like structures. Phosphorylation by ROCK2 suppresses the head-to-tail association of the N-terminal and C-terminal halves resulting in an opened conformation which is capable of actin and membrane-binding. Phosphorylation on Thr-558 by STK10 negatively regulates lymphocyte migration and polarization. S-nitrosylation of Cys-117 is induced by interferon-gamma and oxidatively-modified low-densitity lipoprotein (LDL(ox)) implicating the iNOS-S100A8/9 transnitrosylase complex.

The protein localises to the cell membrane. It is found in the cytoplasm. The protein resides in the cytoskeleton. Its subcellular location is the apical cell membrane. It localises to the cell projection. The protein localises to the microvillus membrane. It is found in the microvillus. A head-to-tail association, of the N-terminal and C-terminal halves results in a closed conformation (inactive form) which is incapable of actin or membrane-binding. Functionally, ezrin-radixin-moesin (ERM) family protein that connects the actin cytoskeleton to the plasma membrane and thereby regulates the structure and function of specific domains of the cell cortex. Tethers actin filaments by oscillating between a resting and an activated state providing transient interactions between moesin and the actin cytoskeleton. Once phosphorylated on its C-terminal threonine, moesin is activated leading to interaction with F-actin and cytoskeletal rearrangement. These rearrangements regulate many cellular processes, including cell shape determination, membrane transport, and signal transduction. The role of moesin is particularly important in immunity acting on both T and B-cells homeostasis and self-tolerance, regulating lymphocyte egress from lymphoid organs. Modulates phagolysosomal biogenesis in macrophages. Participates also in immunologic synapse formation. The polypeptide is Moesin (Bos taurus (Bovine)).